We begin with the raw amino-acid sequence, 141 residues long: Auxin-responsive protein SAUR64 (141 aa).

Belongs to the ARG7 family.

It localises to the cell membrane. May promote auxin-stimulated organ elongation, such as hypocotyls, stamen filaments and petals. The chain is Auxin-responsive protein SAUR64 from Arabidopsis thaliana (Mouse-ear cress).